A 517-amino-acid chain; its full sequence is Crotonobetaine/carnitine--CoA ligase (517 aa).

It belongs to the ATP-dependent AMP-binding enzyme family.

The enzyme catalyses 4-(trimethylamino)butanoate + ATP + CoA = 4-(trimethylamino)butanoyl-CoA + AMP + diphosphate. It carries out the reaction crotonobetaine + ATP + CoA = crotonobetainyl-CoA + AMP + diphosphate. The catalysed reaction is (R)-carnitine + ATP + CoA = (R)-carnitinyl-CoA + AMP + diphosphate. It functions in the pathway amine and polyamine metabolism; carnitine metabolism. In terms of biological role, catalyzes the transfer of CoA to carnitine, generating the initial carnitinyl-CoA needed for the CaiB reaction cycle. Also has activity toward crotonobetaine and gamma-butyrobetaine. The protein is Crotonobetaine/carnitine--CoA ligase of Salmonella paratyphi B (strain ATCC BAA-1250 / SPB7).